Here is a 1062-residue protein sequence, read N- to C-terminus: Integrin alpha-8 (1062 aa).

A signal peptide spans 1–35; it reads MSAGTHCGPPGNRAPPFARLCCVSAALGMLWSPAC. The Extracellular portion of the chain corresponds to 36 to 1010; the sequence is LAFNLDVDKL…ATPNVSFSIP (975 aa). FG-GAP repeat units follow at residues 41-104, 121-182, 187-239, 252-305, 306-371, 372-430, and 434-497; these read DVDK…RSAQ, NGTK…AYAE, RNSN…IANY, KQTD…STDM, TFIQ…LLFQ, DPQV…GLHS, and QVLQ…LHPM. Asn80 carries an N-linked (GlcNAc...) asparagine glycan. Cys95 and Cys105 are joined by a disulfide. A glycan (N-linked (GlcNAc...) asparagine) is linked at Asn121. Residues Cys149 and Cys170 are joined by a disulfide bond. Asn176 carries an N-linked (GlcNAc...) asparagine glycan. Cys186 and Cys199 form a disulfide bridge. N-linked (GlcNAc...) asparagine glycosylation is present at Asn238. The Ca(2+) site is built by Glu274, Thr276, Asp278, and Glu282. 2 N-linked (GlcNAc...) asparagine glycosylation sites follow: Asn301 and Asn310. The Ca(2+) site is built by Asp328, Asn330, Asp332, Asp336, Asp394, Asn396, Asp398, Tyr400, and Asp402. Positions 454-456 match the Cell attachment site motif; it reads RGD. Ca(2+) contacts are provided by Asp458, Asp460, Asn462, Tyr464, and Asp466. N-linked (GlcNAc...) asparagine glycosylation occurs at Asn503. 2 disulfides stabilise this stretch: Cys506-Cys517 and Cys523-Cys579. Asn600 and Asn604 each carry an N-linked (GlcNAc...) asparagine glycan. Disulfide bonds link Cys640–Cys646 and Cys712–Cys725. Residues Asn718, Asn736, Asn752, Asn779, Asn895, and Asn922 are each glycosylated (N-linked (GlcNAc...) asparagine). Intrachain disulfides connect Cys866–Cys923 and Cys928–Cys933. N-linked (GlcNAc...) asparagine glycosylation is present at Asn1004. The chain crosses the membrane as a helical span at residues 1011-1031; that stretch reads LWVIILAILLGLLVLAILTLA. Residues 1032-1062 are Cytoplasmic-facing; the sequence is LWKCGFFDRARPPQDEMTDREQLTSDKTPEA.

This sequence belongs to the integrin alpha chain family. In terms of assembly, heterodimer of an alpha and a beta subunit. The alpha subunit is composed of a heavy and a light chain linked by a disulfide bond. Alpha-8 associates with beta-1. In terms of tissue distribution, in brain, expressed in deep cortex, hippocampal CA1, basolateral amygdala and striatum. In kidney, expressed in glomerular mesengium (at protein level).

The protein resides in the membrane. Its subcellular location is the cell membrane. In terms of biological role, integrin alpha-8/beta-1 functions in the genesis of kidney and probably of other organs by regulating the recruitment of mesenchymal cells into epithelial structures. It recognizes the sequence R-G-D in a wide array of ligands including TNC, FN1, SPP1 TGFB1, TGFB3 and VTN. NPNT is probably its functional ligand in kidney genesis. Neuronal receptor for TNC it mediates cell-cell interactions and regulates neurite outgrowth of sensory and motor neurons. This chain is Integrin alpha-8 (Itga8), found in Mus musculus (Mouse).